Here is a 633-residue protein sequence, read N- to C-terminus: Probable extracellular metalloproteinase 5 (633 aa).

The first 20 residues, 1 to 20 (MHGLLLAAAGLLSLPLHVLA), serve as a signal peptide directing secretion. The propeptide occupies 21 to 244 (HPQPSTNLAG…VHNVVDYVSH (224 aa)). Asn-285 is a glycosylation site (N-linked (GlcNAc...) asparagine). Zn(2+) is bound at residue His-428. Glu-429 is an active-site residue. A Zn(2+)-binding site is contributed by His-432. N-linked (GlcNAc...) asparagine glycosylation is found at Asn-592 and Asn-621.

Belongs to the peptidase M36 family. It depends on Zn(2+) as a cofactor.

Its subcellular location is the secreted. Its function is as follows. Secreted metalloproteinase probably acting as a virulence factor. The protein is Probable extracellular metalloproteinase 5 (MEP5) of Trichophyton verrucosum (strain HKI 0517).